The sequence spans 222 residues: Uclacyanin-3 (222 aa).

A signal peptide spans 1–21; sequence MGSTVAAALLLFLAAVPAVFA. The Phytocyanin domain occupies 22–120; the sequence is ATFKVGDISG…GMKLAVPVLA (99 aa). Residues histidine 61, cysteine 102, histidine 107, and methionine 112 each contribute to the Cu cation site. Residues cysteine 74 and cysteine 108 are joined by a disulfide bond. The disordered stretch occupies residues 121–198; that stretch reads AAPSPSTPSS…APLPPSLSPN (78 aa). 2 stretches are compositionally biased toward pro residues: residues 125–172 and 185–195; these read PSTP…PSAS and TPPPAPLPPSL. Asparagine 198 carries the GPI-anchor amidated asparagine lipid modification. The propeptide at 199 to 222 is removed in mature form; the sequence is AASKGVMSYGIIGVTMILMYAVMT.

Its subcellular location is the cell membrane. Probably acts as an electron carrier involved in oxygen activation and/or lignin formation. The polypeptide is Uclacyanin-3 (UCC3) (Arabidopsis thaliana (Mouse-ear cress)).